The chain runs to 318 residues: L-lactate dehydrogenase (318 aa).

NAD(+) contacts are provided by residues valine 18, aspartate 39, lysine 44, tyrosine 69, and 83-84 (GA). Substrate contacts are provided by glutamine 86 and arginine 92. Residues serine 105, 122 to 124 (VSN), and serine 147 each bind NAD(+). 124–127 (NPVD) serves as a coordination point for substrate. 152 to 155 (DTSR) provides a ligand contact to substrate. The Proton acceptor role is filled by histidine 179. Position 225 is a phosphotyrosine (tyrosine 225). Residue threonine 234 participates in substrate binding.

The protein belongs to the LDH/MDH superfamily. LDH family. As to quaternary structure, homotetramer.

The protein localises to the cytoplasm. The enzyme catalyses (S)-lactate + NAD(+) = pyruvate + NADH + H(+). The protein operates within fermentation; pyruvate fermentation to lactate; (S)-lactate from pyruvate: step 1/1. In terms of biological role, catalyzes the conversion of lactate to pyruvate. The chain is L-lactate dehydrogenase from Clostridium botulinum (strain 657 / Type Ba4).